A 1030-amino-acid polypeptide reads, in one-letter code: Importin beta-like SAD2 homolog (1030 aa).

M1 bears the N-acetylmethionine mark. Residues 25 to 99 (AEQSLNQLQH…RNQILVFVSQ (75 aa)) enclose the Importin N-terminal domain. Disordered stretches follow at residues 886–928 (AAKA…GSTL) and 940–964 (SYSD…PIDE). Acidic residues-rich tracts occupy residues 890-924 (EEEE…DETD) and 943-964 (DDDD…PIDE).

Belongs to the importin beta family.

The protein localises to the cytoplasm. Its subcellular location is the nucleus. Functionally, functions probably in nuclear protein import, either by acting as autonomous nuclear transport receptor or as an adapter-like protein in association with other importin subunits. The polypeptide is Importin beta-like SAD2 homolog (Arabidopsis thaliana (Mouse-ear cress)).